A 492-amino-acid polypeptide reads, in one-letter code: GDP-Man:Man(3)GlcNAc(2)-PP-Dol alpha-1,2-mannosyltransferase (492 aa).

Topologically, residues 1 to 19 are lumenal; sequence MAADTGSWCVYAVLRFFYS. A helical transmembrane segment spans residues 20 to 40; sequence LFFPGLMICGVLCVYLVIGLW. Over 41-233 the chain is Cytoplasmic; it reads VIRWHLQRKK…SRNALLSKAK (193 aa). Positions 234-254 form an intramembrane region, helical; it reads LIYYYLFAFVYGLVGSCSDIV. The Cytoplasmic segment spans residues 255-399; the sequence is MVNSSWTLNH…IGLHTMWNEH (145 aa). An intramembrane region (helical) is located at residues 400-420; sequence FGIGVVECMAAGTVILAHNSG. Residues 421–492 lie on the Cytoplasmic side of the membrane; sequence GPKLDIVIPH…FLCSMEKLLT (72 aa).

Belongs to the glycosyltransferase group 1 family. Glycosyltransferase 4 subfamily.

It is found in the endoplasmic reticulum membrane. The enzyme catalyses an alpha-D-Man-(1-&gt;3)-[alpha-D-Man-(1-&gt;6)]-beta-D-Man-(1-&gt;4)-beta-D-GlcNAc-(1-&gt;4)-alpha-D-GlcNAc-diphospho-di-trans,poly-cis-dolichol + 2 GDP-alpha-D-mannose = an alpha-D-Man-(1-&gt;2)-alpha-D-Man-(1-&gt;2)-alpha-D-Man-(1-&gt;3)-[alpha-D-Man-(1-&gt;6)]-beta-D-Man-(1-&gt;4)-beta-D-GlcNAc-(1-&gt;4)-alpha-D-GlcNAc-diphospho-di-trans,poly-cis-dolichol + 2 GDP + 2 H(+). The protein operates within protein modification; protein glycosylation. Functionally, GDP-Man:Man(3)GlcNAc(2)-PP-Dol alpha-1,2-mannosyltransferase that operates in the biosynthetic pathway of dolichol-linked oligosaccharides, the glycan precursors employed in protein asparagine (N)-glycosylation. The assembly of dolichol-linked oligosaccharides begins on the cytosolic side of the endoplasmic reticulum membrane and finishes in its lumen. The sequential addition of sugars to dolichol pyrophosphate produces dolichol-linked oligosaccharides containing fourteen sugars, including two GlcNAcs, nine mannoses and three glucoses. Once assembled, the oligosaccharide is transferred from the lipid to nascent proteins by oligosaccharyltransferases. Catalyzes, on the cytoplasmic face of the endoplasmic reticulum, the addition of the fourth and fifth mannose residues to the dolichol-linked oligosaccharide chain, to produce Man(5)GlcNAc(2)-PP-dolichol core oligosaccharide. Man(5)GlcNAc(2)-PP-dolichol is a substrate for ALG3, the following enzyme in the biosynthetic pathway. The polypeptide is GDP-Man:Man(3)GlcNAc(2)-PP-Dol alpha-1,2-mannosyltransferase (Mus musculus (Mouse)).